The sequence spans 132 residues: Putative apolipoprotein(a)-like protein 2 (132 aa).

Positions 1-21 are cleaved as a signal peptide; the sequence is MEHKEVVLLLLLFLKSAPTET. The region spanning 27–105 is the Kringle domain; that stretch reads ECYHSNGQSY…RWEYCNLTRC (79 aa). 3 cysteine pairs are disulfide-bonded: Cys-28-Cys-105, Cys-49-Cys-88, and Cys-77-Cys-100. Residue Asn-101 is glycosylated (N-linked (GlcNAc...) asparagine).

As to expression, expressed in liver but not in other tissues tested.

It localises to the secreted. The chain is Putative apolipoprotein(a)-like protein 2 (LPAL2) from Homo sapiens (Human).